A 118-amino-acid chain; its full sequence is Ribosome-binding factor A (118 aa).

Belongs to the RbfA family. As to quaternary structure, monomer. Binds 30S ribosomal subunits, but not 50S ribosomal subunits or 70S ribosomes.

Its subcellular location is the cytoplasm. In terms of biological role, one of several proteins that assist in the late maturation steps of the functional core of the 30S ribosomal subunit. Associates with free 30S ribosomal subunits (but not with 30S subunits that are part of 70S ribosomes or polysomes). Required for efficient processing of 16S rRNA. May interact with the 5'-terminal helix region of 16S rRNA. In Bacillus cereus (strain AH820), this protein is Ribosome-binding factor A.